Here is a 320-residue protein sequence, read N- to C-terminus: Methionyl-tRNA formyltransferase (320 aa).

Position 111–114 (111–114 (SLLP)) interacts with (6S)-5,6,7,8-tetrahydrofolate.

Belongs to the Fmt family.

It carries out the reaction L-methionyl-tRNA(fMet) + (6R)-10-formyltetrahydrofolate = N-formyl-L-methionyl-tRNA(fMet) + (6S)-5,6,7,8-tetrahydrofolate + H(+). Its function is as follows. Attaches a formyl group to the free amino group of methionyl-tRNA(fMet). The formyl group appears to play a dual role in the initiator identity of N-formylmethionyl-tRNA by promoting its recognition by IF2 and preventing the misappropriation of this tRNA by the elongation apparatus. The protein is Methionyl-tRNA formyltransferase of Pediococcus pentosaceus (strain ATCC 25745 / CCUG 21536 / LMG 10740 / 183-1w).